The primary structure comprises 218 residues: MGQKINPLGFRLGTTQSHHSLWFAQPKKYCEGLEEDKKIRDCIKNYVQKNIRISSGMEGIARIEIQKRIDLIQVIIYMGFPKLLIEDKPRRVEELQMNVQKELNCVNRKLNIAITRISTPYGHPNILAEFIAGQLKNRVSFRKAMKKAIELTEQANTKGIQVQIAGRIDGKEIARVEWIREGRVPLQTIEAKIDYCSYTVRTIYGVLGIKIWIFVDEE.

The region spanning 47-118 is the KH type-2 domain; sequence VQKNIRISSG…KLNIAITRIS (72 aa).

This sequence belongs to the universal ribosomal protein uS3 family. As to quaternary structure, part of the 30S ribosomal subunit.

The protein resides in the plastid. It localises to the chloroplast. This Aethionema cordifolium (Lebanon stonecress) protein is Small ribosomal subunit protein uS3c (rps3).